We begin with the raw amino-acid sequence, 879 residues long: Alanine--tRNA ligase (879 aa).

Residues 426 to 449 are disordered; sequence KQKERARNARGNMDGESWKEDPLS. Residues H566, H570, C668, and H672 each contribute to the Zn(2+) site.

The protein belongs to the class-II aminoacyl-tRNA synthetase family. Zn(2+) is required as a cofactor.

It localises to the cytoplasm. The enzyme catalyses tRNA(Ala) + L-alanine + ATP = L-alanyl-tRNA(Ala) + AMP + diphosphate. Its function is as follows. Catalyzes the attachment of alanine to tRNA(Ala) in a two-step reaction: alanine is first activated by ATP to form Ala-AMP and then transferred to the acceptor end of tRNA(Ala). Also edits incorrectly charged Ser-tRNA(Ala) and Gly-tRNA(Ala) via its editing domain. This chain is Alanine--tRNA ligase, found in Clostridioides difficile (strain 630) (Peptoclostridium difficile).